The primary structure comprises 167 residues: Protein-export protein SecB (167 aa).

Belongs to the SecB family. Homotetramer, a dimer of dimers. One homotetramer interacts with 1 SecA dimer.

The protein localises to the cytoplasm. In terms of biological role, one of the proteins required for the normal export of preproteins out of the cell cytoplasm. It is a molecular chaperone that binds to a subset of precursor proteins, maintaining them in a translocation-competent state. It also specifically binds to its receptor SecA. This Cellvibrio japonicus (strain Ueda107) (Pseudomonas fluorescens subsp. cellulosa) protein is Protein-export protein SecB.